The sequence spans 311 residues: Glutaminase (311 aa).

Substrate-binding residues include Ser66, Asn116, Glu162, Asn169, Tyr193, Tyr245, and Val263.

Belongs to the glutaminase family. In terms of assembly, homotetramer.

It catalyses the reaction L-glutamine + H2O = L-glutamate + NH4(+). This is Glutaminase from Rhodopseudomonas palustris (strain BisB5).